We begin with the raw amino-acid sequence, 125 residues long: Large ribosomal subunit protein bL12 (125 aa).

This sequence belongs to the bacterial ribosomal protein bL12 family. Homodimer. Part of the ribosomal stalk of the 50S ribosomal subunit. Forms a multimeric L10(L12)X complex, where L10 forms an elongated spine to which 2 to 4 L12 dimers bind in a sequential fashion. Binds GTP-bound translation factors.

Functionally, forms part of the ribosomal stalk which helps the ribosome interact with GTP-bound translation factors. Is thus essential for accurate translation. This Paraburkholderia phymatum (strain DSM 17167 / CIP 108236 / LMG 21445 / STM815) (Burkholderia phymatum) protein is Large ribosomal subunit protein bL12.